Here is a 429-residue protein sequence, read N- to C-terminus: 4-hydroxyphenylacetate degradation bifunctional isomerase/decarboxylase (429 aa).

Approximate repeat units follow at residues 1-215 and 216-429; these read MKGT…RKSF and PTLP…ETAK. A divalent metal cation contacts are provided by Glu-276, Glu-278, and Asp-307.

This sequence belongs to the FAH family. As to quaternary structure, monomer. Mg(2+) is required as a cofactor.

It catalyses the reaction (2E,4Z)-5-hydroxypenta-2,4-diene-1,2,5-tricarboxylate = (3E,5R)-5-carboxy-2-oxohept-3-enedioate. The enzyme catalyses (3E,5R)-5-carboxy-2-oxohept-3-enedioate + H(+) = (4Z)-2-oxohept-4-enedioate + CO2. Its pathway is aromatic compound metabolism; 4-hydroxyphenylacetate degradation; pyruvate and succinate semialdehyde from 4-hydroxyphenylacetate: step 4/7. It participates in aromatic compound metabolism; 4-hydroxyphenylacetate degradation; pyruvate and succinate semialdehyde from 4-hydroxyphenylacetate: step 5/7. In terms of biological role, decarboxylates OPET (5-oxo-pent-3-ene-1,2,5-tricarboxylic acid) into HHDD (2-hydroxy-hept-2,4-diene-1,7-dioate) and isomerizes it to OHED (2-oxo-hept-3-ene-1,7-dioate). This is 4-hydroxyphenylacetate degradation bifunctional isomerase/decarboxylase (hpaG) from Escherichia coli.